The chain runs to 88 residues: Small ribosomal subunit protein uS15 (88 aa).

Belongs to the universal ribosomal protein uS15 family. As to quaternary structure, part of the 30S ribosomal subunit. Forms a bridge to the 50S subunit in the 70S ribosome, contacting the 23S rRNA.

In terms of biological role, one of the primary rRNA binding proteins, it binds directly to 16S rRNA where it helps nucleate assembly of the platform of the 30S subunit by binding and bridging several RNA helices of the 16S rRNA. Its function is as follows. Forms an intersubunit bridge (bridge B4) with the 23S rRNA of the 50S subunit in the ribosome. In Sorangium cellulosum (strain So ce56) (Polyangium cellulosum (strain So ce56)), this protein is Small ribosomal subunit protein uS15.